The following is a 236-amino-acid chain: MFDSFLNELHSDITKRGGSPLPLPEGLEECRSSKSSSVIQSWLWDVPGFRRWRVTRLDAGDSLQVFNSVAYPDYNYDHPLMGVDLLWFGARQKLVAVLDFQPLVQDKDYLDRYFSGLKELNQRFPDLNGEETMRSFDPNQYFSSWLLFCRGGAEQADLSLPKAFSAFLKAYWDLHDNAKSIPSTIPPEEVKNLQDKYDIYSAERDPAHGLFTSHFGKDWSNRFLHEFLFPASSSHK.

It belongs to the HY2 family.

The catalysed reaction is 15,16-dihydrobiliverdin + oxidized 2[4Fe-4S]-[ferredoxin] = biliverdin IXalpha + reduced 2[4Fe-4S]-[ferredoxin] + 2 H(+). Catalyzes the two-electron reduction of biliverdin IX-alpha at the C15 methine bridge. The chain is 15,16-dihydrobiliverdin:ferredoxin oxidoreductase (pebA) from Synechococcus sp. (strain WH8020).